Consider the following 134-residue polypeptide: Probable histone H2A.3 (134 aa).

Belongs to the histone H2A family. The nucleosome is a histone octamer containing two molecules each of H2A, H2B, H3 and H4 assembled in one H3-H4 heterotetramer and two H2A-H2B heterodimers. The octamer wraps approximately 147 bp of DNA.

It is found in the nucleus. The protein localises to the chromosome. Functionally, core component of nucleosome. Nucleosomes wrap and compact DNA into chromatin, limiting DNA accessibility to the cellular machineries which require DNA as a template. Histones thereby play a central role in transcription regulation, DNA repair, DNA replication and chromosomal stability. DNA accessibility is regulated via a complex set of post-translational modifications of histones, also called histone code, and nucleosome remodeling. The protein is Probable histone H2A.3 of Oryza sativa subsp. indica (Rice).